The chain runs to 157 residues: Glucosamine 6-phosphate N-acetyltransferase 1 (157 aa).

Residues 9 to 157 form the N-acetyltransferase domain; sequence ISFRPLDIDD…SIYLPTPPKL (149 aa). Residues Thr-31, 78–81, and 90–92 contribute to the substrate site; these read KFIR and EDI. 100–105 lines the acetyl-CoA pocket; the sequence is GKNLGL. 121-122 lines the substrate pocket; that stretch reads YK. 135–137 contributes to the acetyl-CoA binding site; it reads YEK.

This sequence belongs to the acetyltransferase family. GNA1 subfamily.

The catalysed reaction is D-glucosamine 6-phosphate + acetyl-CoA = N-acetyl-D-glucosamine 6-phosphate + CoA + H(+). Its pathway is nucleotide-sugar biosynthesis; UDP-N-acetyl-alpha-D-glucosamine biosynthesis; N-acetyl-alpha-D-glucosamine 1-phosphate from alpha-D-glucosamine 6-phosphate (route I): step 1/2. The chain is Glucosamine 6-phosphate N-acetyltransferase 1 (gna1) from Dictyostelium discoideum (Social amoeba).